The primary structure comprises 524 residues: GMP synthase [glutamine-hydrolyzing] (524 aa).

One can recognise a Glutamine amidotransferase type-1 domain in the interval 8–206; sequence RILILDFGSQ…IYDICGCEAL (199 aa). Residue Cys-85 is the Nucleophile of the active site. Residues His-180 and Glu-182 contribute to the active site. Residues 207-399 form the GMPS ATP-PPase domain; it reads WEPRHIIAKS…LGLPFELVYR (193 aa). 234–240 contributes to the ATP binding site; that stretch reads SGGVDSS.

Homodimer.

It carries out the reaction XMP + L-glutamine + ATP + H2O = GMP + L-glutamate + AMP + diphosphate + 2 H(+). It participates in purine metabolism; GMP biosynthesis; GMP from XMP (L-Gln route): step 1/1. Its function is as follows. Catalyzes the synthesis of GMP from XMP. The protein is GMP synthase [glutamine-hydrolyzing] of Nitrosococcus oceani (strain ATCC 19707 / BCRC 17464 / JCM 30415 / NCIMB 11848 / C-107).